The sequence spans 375 residues: MHNQAPIQRRKSTRIYVGNVPIGDGAPIAVQSMTNTRTTDVEATVNQIKALERVGADIVRVSVPTMDAAEAFKLIKQRVNVPLVADIHFDYRIALKVAEYGVDCLRINPGNIGNEERIRMVVDCARDKNIPIRIGVNAGSLEKDLQEKYGEPTPQALLESAMRHVDHLDRLNFDQFKVSVKASDVFLAVESYRLLAKQIDQPLHLGITEAGGARSGAVKSAIGLGLLLSEGIGDTLRVSLAADPVEEIKVGFDILKSLRIRSRGINFIACPTCSRQEFDVIGTVNALEQRLEDIITPMDVSIIGCVVNGPGEALVSTLGVTGGNKKSGLYEDGVRKDRLDNNDMIDQLEARIRAKASQLDEARRIDVQQVGKIIT.

Positions 270, 273, 305, and 312 each coordinate [4Fe-4S] cluster.

The protein belongs to the IspG family. [4Fe-4S] cluster is required as a cofactor.

The enzyme catalyses (2E)-4-hydroxy-3-methylbut-2-enyl diphosphate + oxidized [flavodoxin] + H2O + 2 H(+) = 2-C-methyl-D-erythritol 2,4-cyclic diphosphate + reduced [flavodoxin]. It functions in the pathway isoprenoid biosynthesis; isopentenyl diphosphate biosynthesis via DXP pathway; isopentenyl diphosphate from 1-deoxy-D-xylulose 5-phosphate: step 5/6. Its function is as follows. Converts 2C-methyl-D-erythritol 2,4-cyclodiphosphate (ME-2,4cPP) into 1-hydroxy-2-methyl-2-(E)-butenyl 4-diphosphate. The sequence is that of 4-hydroxy-3-methylbut-2-en-1-yl diphosphate synthase (flavodoxin) from Shigella flexneri serotype 5b (strain 8401).